A 56-amino-acid chain; its full sequence is Large ribosomal subunit protein bL32 (56 aa).

The segment at 1 to 26 (MAVQKSKVTRSRRGQRRSHDALTAAA) is disordered. The segment covering 7-16 (KVTRSRRGQR) has biased composition (basic residues).

The protein belongs to the bacterial ribosomal protein bL32 family.

The protein is Large ribosomal subunit protein bL32 (rpmF) of Moritella marina (Vibrio marinus).